The following is a 110-amino-acid chain: Nucleotide-binding protein in fmt 3'region (110 aa).

8–15 (GLSGAGKT) lines the ATP pocket. A GTP-binding site is contributed by 57-60 (DARA).

This sequence belongs to the RapZ-like family.

Its function is as follows. Displays ATPase and GTPase activities. This chain is Nucleotide-binding protein in fmt 3'region, found in Thermus thermophilus.